The chain runs to 447 residues: Tubulin beta-4 chain (447 aa).

Residues Gln-11, Glu-71, Ser-140, Gly-144, Thr-145, Gly-146, Asn-206, and Asn-228 each coordinate GTP. Position 71 (Glu-71) interacts with Mg(2+). The tract at residues 428–447 is disordered; the sequence is QDATAEEYEEEEHDGEEEHA. Residues 431 to 447 are compositionally biased toward acidic residues; it reads TAEEYEEEEHDGEEEHA.

It belongs to the tubulin family. Dimer of alpha and beta chains. A typical microtubule is a hollow water-filled tube with an outer diameter of 25 nm and an inner diameter of 15 nM. Alpha-beta heterodimers associate head-to-tail to form protofilaments running lengthwise along the microtubule wall with the beta-tubulin subunit facing the microtubule plus end conferring a structural polarity. Microtubules usually have 13 protofilaments but different protofilament numbers can be found in some organisms and specialized cells. Mg(2+) is required as a cofactor.

It localises to the cytoplasm. Its subcellular location is the cytoskeleton. Functionally, tubulin is the major constituent of microtubules, a cylinder consisting of laterally associated linear protofilaments composed of alpha- and beta-tubulin heterodimers. Microtubules grow by the addition of GTP-tubulin dimers to the microtubule end, where a stabilizing cap forms. Below the cap, tubulin dimers are in GDP-bound state, owing to GTPase activity of alpha-tubulin. This is Tubulin beta-4 chain (TUBB4) from Zea mays (Maize).